Here is a 420-residue protein sequence, read N- to C-terminus: 20-oxo-5-O-mycaminosyltylactone 23-monooxygenase (420 aa).

The segment at 1 to 28 is disordered; sequence MSSSGDARPSQKGILLPAARANDTDEAA. Heme is bound by residues His118, Arg122, Arg311, His367, and Cys369.

The protein belongs to the cytochrome P450 family.

It carries out the reaction 20-oxo-5-O-beta-D-mycaminosyltylonolide + 2 reduced [2Fe-2S]-[ferredoxin] + O2 + 2 H(+) = 5-O-beta-D-mycaminosyltylonolide + 2 oxidized [2Fe-2S]-[ferredoxin] + H2O. It functions in the pathway antibiotic biosynthesis; tylosin biosynthesis. Its function is as follows. Involved in the biosynthesis of the complex macrolide antibiotic tylosin. Catalyzes the hydroxylation of 20-oxo-5-O-beta-mycaminosyltylactone at the C-23 position to yield 5-O-beta-mycaminosyltylonolide. This chain is 20-oxo-5-O-mycaminosyltylactone 23-monooxygenase, found in Streptomyces fradiae (Streptomyces roseoflavus).